A 373-amino-acid polypeptide reads, in one-letter code: 3-isopropylmalate dehydrogenase AMT6 (373 aa).

77–79 (VGG) provides a ligand contact to NADP(+). Residues R97 and R136 each coordinate substrate. Residues D227, D252, and D256 each coordinate Mg(2+). Residue 284-289 (SRIRGL) coordinates NADP(+).

Belongs to the isocitrate and isopropylmalate dehydrogenases family. Homodimer. Requires Mg(2+) as cofactor. It depends on Mn(2+) as a cofactor.

It catalyses the reaction (2R,3S)-3-isopropylmalate + NAD(+) = 4-methyl-2-oxopentanoate + CO2 + NADH. It functions in the pathway amino-acid biosynthesis; L-leucine biosynthesis; L-leucine from 3-methyl-2-oxobutanoate: step 3/4. Its pathway is mycotoxin biosynthesis. 3-isopropylmalate dehydrogenase; part of the gene clusters that mediate the biosynthesis of AM-toxins, host-selective toxins (HSTs) causing Alternaria blotch on apple, a worldwide distributed disease. AM-toxins are cyclic depsipeptides containing the 3 residues 2-hydroxy-isovaleric acid (2-HIV), dehydroalanine, L-alanine which are common for all 3 AM-toxins I to III. The fourth precursor is L-alpha-amino-methoxyphenyl-valeric acid (L-Amv) for AM-toxin I, L-alpha-amino-phenyl-valeric acid (L-Apv) for AM-toxin II, and L-alpha-amino-hydroxyphenyl-valeric acid (L-Ahv) for AM-toxin III. AM-toxins have two target sites for affecting susceptible apple cells; they cause invagination of the plasma membrane and electrolyte loss and chloroplast disorganization. The non-ribosomal peptide synthetase AMT1 contains 4 catalytic modules and is responsible for activation of each residue in AM-toxin. The aldo-keto reductase AMT2 catalyzes the conversion of 2-keto-isovaleric acid (2-KIV) to 2-hydroxy-isovaleric acid (2-HIV), one of the precursor residues incorporated by AMT1 during AM-toxin biosynthesis, by reduction of its ketone to an alcohol. The cytochrome P450 monooxygenase AMT3 and the thioesterase AMT4 are also important for AM-toxin production, but their exact function within the AM-toxin biosynthesis are not known yet. Up to 21 proteins (including AMT1 to AMT4) are predicted to be involved in AM-toxin biosynthesis since their expression ishighly up-regulated in AM-toxin-producing cultures. The chain is 3-isopropylmalate dehydrogenase AMT6 from Alternaria alternata (Alternaria rot fungus).